We begin with the raw amino-acid sequence, 203 residues long: MRSPVQLQHGSDATNGFHTLQPHDQTDGPIKRVCLTRGMHVPEHVAMHHTHDVGPDQCCSSVVQMIHAPPESVWALVRRFDNPKVYKNFIRQCRIVQGDGLHVGDLREVMVVSGLPAVSSTERLEILDEERHVISFSVVGGDHRLKNYRSVTTLHASDDEGTVVVESYIVDVPPGNTEEETLSFVDTIVRCNLQSLARSTNRQ.

Polar residues predominate over residues 1–18 (MRSPVQLQHGSDATNGFH). Residues 1-29 (MRSPVQLQHGSDATNGFHTLQPHDQTDGP) form a disordered region. The interval 51–201 (HDVGPDQCCS…NLQSLARSTN (151 aa)) is START-like. Abscisate is bound by residues Lys-87, 117 to 122 (AVSSTE), 144 to 150 (RLKNYRS), and Glu-166. Residues 113 to 117 (SGLPA) carry the Gate loop motif. Residues 143–145 (HRL) carry the Latch loop motif.

This sequence belongs to the PYR/PYL/RCAR abscisic acid intracellular receptor family. Monomer. Homodimer. Binds ABA on one subunit only. Binds to CARs protein in an ABA-independent manner, both at the plasma membrane and in the nucleus. Binds both (-)-ABA and (+)-ABA. Interacts with HAB1, ABI1 and ABI2, and possibly with other PP2Cs.

It localises to the cytoplasm. The protein localises to the nucleus. The protein resides in the cell membrane. Functionally, receptor for abscisic acid (ABA) required for ABA-mediated responses such as stomatal closure and germination inhibition. Inhibits the activity of group-A protein phosphatases type 2C (PP2Cs) in an ABA-independent manner but more efficiently when activated by ABA. Confers enhanced sensitivity to ABA. Can be activated by both (-)-ABA and (+)-ABA. The protein is Abscisic acid receptor PYL5 (PYL5) of Arabidopsis thaliana (Mouse-ear cress).